Consider the following 357-residue polypeptide: Chorismate synthase (357 aa).

An NADP(+)-binding site is contributed by Arg48. FMN-binding positions include 125–127, 238–239, Gly282, 297–301, and Arg323; these read RSS, NA, and KPTSS.

It belongs to the chorismate synthase family. As to quaternary structure, homotetramer. Requires FMNH2 as cofactor.

The catalysed reaction is 5-O-(1-carboxyvinyl)-3-phosphoshikimate = chorismate + phosphate. Its pathway is metabolic intermediate biosynthesis; chorismate biosynthesis; chorismate from D-erythrose 4-phosphate and phosphoenolpyruvate: step 7/7. Catalyzes the anti-1,4-elimination of the C-3 phosphate and the C-6 proR hydrogen from 5-enolpyruvylshikimate-3-phosphate (EPSP) to yield chorismate, which is the branch point compound that serves as the starting substrate for the three terminal pathways of aromatic amino acid biosynthesis. This reaction introduces a second double bond into the aromatic ring system. In Gluconacetobacter diazotrophicus (strain ATCC 49037 / DSM 5601 / CCUG 37298 / CIP 103539 / LMG 7603 / PAl5), this protein is Chorismate synthase.